The sequence spans 495 residues: uncharacterized protein (495 aa).

6 residues coordinate FAD: Ser-16, Glu-36, Trp-45, Asp-56, Tyr-62, and Val-105.

Belongs to the FAD-binding monooxygenase family. It depends on FAD as a cofactor.

This is an uncharacterized protein from Mycobacterium tuberculosis (strain CDC 1551 / Oshkosh).